Reading from the N-terminus, the 300-residue chain is Sulfate adenylyltransferase subunit 2 (300 aa).

Residues arginine 281 to phenylalanine 300 form a disordered region.

The protein belongs to the PAPS reductase family. CysD subfamily. Heterodimer composed of CysD, the smaller subunit, and CysN.

The enzyme catalyses sulfate + ATP + H(+) = adenosine 5'-phosphosulfate + diphosphate. It functions in the pathway sulfur metabolism; hydrogen sulfide biosynthesis; sulfite from sulfate: step 1/3. Its function is as follows. With CysN forms the ATP sulfurylase (ATPS) that catalyzes the adenylation of sulfate producing adenosine 5'-phosphosulfate (APS) and diphosphate, the first enzymatic step in sulfur assimilation pathway. APS synthesis involves the formation of a high-energy phosphoric-sulfuric acid anhydride bond driven by GTP hydrolysis by CysN coupled to ATP hydrolysis by CysD. The sequence is that of Sulfate adenylyltransferase subunit 2 from Brucella melitensis biotype 2 (strain ATCC 23457).